A 253-amino-acid chain; its full sequence is Pimeloyl-[acyl-carrier protein] methyl ester esterase (253 aa).

Substrate is bound by residues Trp-18, 78 to 79 (SL), and 139 to 143 (FLALD). The active-site Nucleophile is the Ser-78. Residues Asp-203 and His-231 contribute to the active site. His-231 lines the substrate pocket.

This sequence belongs to the AB hydrolase superfamily. Carboxylesterase BioH family. As to quaternary structure, monomer.

It localises to the cytoplasm. It carries out the reaction 6-carboxyhexanoyl-[ACP] methyl ester + H2O = 6-carboxyhexanoyl-[ACP] + methanol + H(+). The protein operates within cofactor biosynthesis; biotin biosynthesis. Its function is as follows. The physiological role of BioH is to remove the methyl group introduced by BioC when the pimeloyl moiety is complete. It allows to synthesize pimeloyl-ACP via the fatty acid synthetic pathway through the hydrolysis of the ester bonds of pimeloyl-ACP esters. This chain is Pimeloyl-[acyl-carrier protein] methyl ester esterase, found in Xanthomonas oryzae pv. oryzae (strain MAFF 311018).